Consider the following 615-residue polypeptide: Putative binding protein BRA0576/BS1330_II0571 (615 aa).

The N-terminal stretch at 1–29 is a signal peptide; sequence MLNRFIAFFRSVFLIGLVATAFGALPARA.

The protein belongs to the bacterial solute-binding protein 5 family.

The protein resides in the periplasm. This chain is Putative binding protein BRA0576/BS1330_II0571, found in Brucella suis biovar 1 (strain 1330).